The sequence spans 285 residues: Acetyl-coenzyme A carboxylase carboxyl transferase subunit beta (285 aa).

The region spanning 29-285 (IMTKCPNCKK…ILKIHQEVSN (257 aa)) is the CoA carboxyltransferase N-terminal domain. Zn(2+) contacts are provided by Cys33, Cys36, Cys52, and Cys55. The C4-type zinc finger occupies 33 to 55 (CPNCKKIMYTKELNENLNVCFNC).

The protein belongs to the AccD/PCCB family. In terms of assembly, acetyl-CoA carboxylase is a heterohexamer composed of biotin carboxyl carrier protein (AccB), biotin carboxylase (AccC) and two subunits each of ACCase subunit alpha (AccA) and ACCase subunit beta (AccD). The cofactor is Zn(2+).

Its subcellular location is the cytoplasm. The catalysed reaction is N(6)-carboxybiotinyl-L-lysyl-[protein] + acetyl-CoA = N(6)-biotinyl-L-lysyl-[protein] + malonyl-CoA. It functions in the pathway lipid metabolism; malonyl-CoA biosynthesis; malonyl-CoA from acetyl-CoA: step 1/1. Component of the acetyl coenzyme A carboxylase (ACC) complex. Biotin carboxylase (BC) catalyzes the carboxylation of biotin on its carrier protein (BCCP) and then the CO(2) group is transferred by the transcarboxylase to acetyl-CoA to form malonyl-CoA. The chain is Acetyl-coenzyme A carboxylase carboxyl transferase subunit beta from Staphylococcus epidermidis (strain ATCC 35984 / DSM 28319 / BCRC 17069 / CCUG 31568 / BM 3577 / RP62A).